The chain runs to 497 residues: D-gluconate dehydratase (497 aa).

A Mg(2+)-binding site is contributed by Glu303. His305 (proton donor) is an active-site residue. Glu329 and Glu355 together coordinate Mg(2+). Catalysis depends on His405, which acts as the Proton acceptor.

This sequence belongs to the mandelate racemase/muconate lactonizing enzyme family. GaD subfamily. It depends on Mg(2+) as a cofactor.

The catalysed reaction is D-gluconate = 2-dehydro-3-deoxy-D-gluconate + H2O. It participates in carbohydrate acid metabolism; D-gluconate degradation. Its function is as follows. Involved in the degradation of glucose via the Entner-Doudoroff pathway. Catalyzes the dehydration of gluconate to produce 2-keto-3-deoxygluconate (KDG). It is not able to use D-galactonate as substrate. The chain is D-gluconate dehydratase (gad) from Thermoproteus tenax.